Here is an 82-residue protein sequence, read N- to C-terminus: RNA-binding protein KhpA (82 aa).

Residues 35–82 (STILELRVSQSDVGKIIGRRGRIARAIRTLLGACAAKTNRRVQLEILD) form the KH domain.

This sequence belongs to the KhpA RNA-binding protein family. As to quaternary structure, forms a complex with KhpB.

The protein localises to the cytoplasm. In terms of biological role, a probable RNA chaperone. Forms a complex with KhpB which binds to cellular RNA and controls its expression. Plays a role in peptidoglycan (PG) homeostasis and cell length regulation. This chain is RNA-binding protein KhpA, found in Borreliella burgdorferi (strain ATCC 35210 / DSM 4680 / CIP 102532 / B31) (Borrelia burgdorferi).